A 707-amino-acid chain; its full sequence is Elongation factor G (707 aa).

The 290-residue stretch at 8–297 folds into the tr-type G domain; sequence ERVRNIGIAA…AVVDYLPSPV (290 aa). GTP-binding positions include 17-24, 96-100, and 150-153; these read AHIDAGKT, DTPGH, and NKMD.

This sequence belongs to the TRAFAC class translation factor GTPase superfamily. Classic translation factor GTPase family. EF-G/EF-2 subfamily.

Its subcellular location is the cytoplasm. In terms of biological role, catalyzes the GTP-dependent ribosomal translocation step during translation elongation. During this step, the ribosome changes from the pre-translocational (PRE) to the post-translocational (POST) state as the newly formed A-site-bound peptidyl-tRNA and P-site-bound deacylated tRNA move to the P and E sites, respectively. Catalyzes the coordinated movement of the two tRNA molecules, the mRNA and conformational changes in the ribosome. The protein is Elongation factor G of Synechococcus sp. (strain JA-2-3B'a(2-13)) (Cyanobacteria bacterium Yellowstone B-Prime).